Here is a 384-residue protein sequence, read N- to C-terminus: Succinyl-diaminopimelate desuccinylase (384 aa).

Residue histidine 71 coordinates Zn(2+). Aspartate 73 is a catalytic residue. Aspartate 104 serves as a coordination point for Zn(2+). The Proton acceptor role is filled by glutamate 138. Residues glutamate 139, glutamate 167, and histidine 357 each coordinate Zn(2+).

It belongs to the peptidase M20A family. DapE subfamily. In terms of assembly, homodimer. Zn(2+) serves as cofactor. Requires Co(2+) as cofactor.

It catalyses the reaction N-succinyl-(2S,6S)-2,6-diaminopimelate + H2O = (2S,6S)-2,6-diaminopimelate + succinate. It participates in amino-acid biosynthesis; L-lysine biosynthesis via DAP pathway; LL-2,6-diaminopimelate from (S)-tetrahydrodipicolinate (succinylase route): step 3/3. Functionally, catalyzes the hydrolysis of N-succinyl-L,L-diaminopimelic acid (SDAP), forming succinate and LL-2,6-diaminopimelate (DAP), an intermediate involved in the bacterial biosynthesis of lysine and meso-diaminopimelic acid, an essential component of bacterial cell walls. The polypeptide is Succinyl-diaminopimelate desuccinylase (Blochmanniella floridana).